A 215-amino-acid chain; its full sequence is Disulfide-bond oxidoreductase YfcG (215 aa).

Positions methionine 1–leucine 87 constitute a GST N-terminal domain. Residues asparagine 11, glutamine 38, arginine 40, isoleucine 52, glutamate 71–serine 72, and arginine 132 each bind glutathione. Residues glutamate 90–serine 215 enclose the GST C-terminal domain.

This sequence belongs to the GST superfamily. Nu-class GSH transferase family. As to quaternary structure, homodimer.

Its function is as follows. Exhibits a very robust glutathione (GSH)-dependent disulfide-bond reductase activity toward the model substrate, 2-hydroxyethyl disulfide; the actual physiological substrates are not known. Also has a low GSH-dependent hydroperoxidase activity toward cumene hydroperoxide, but does not reduce H(2)O(2), tert-butyl hydroperoxide, benzyl peroxide, or lauroyl peroxide. Exhibits little or no GSH transferase activity with most typical electrophilic substrates, and has no detectable transferase activity using glutathionylspermidine (GspSH) as the nucleophilic substrate. Is involved in defense against oxidative stress, probably via its peroxidase activity. This is Disulfide-bond oxidoreductase YfcG (yfcG) from Escherichia coli (strain K12).